A 202-amino-acid chain; its full sequence is Small ribosomal subunit protein uS4 (202 aa).

An S4 RNA-binding domain is found at 91–168 (SMLSSVLYNS…QKVPDYLEVD (78 aa)).

This sequence belongs to the universal ribosomal protein uS4 family. In terms of assembly, part of the 30S ribosomal subunit. Contacts protein S5. The interaction surface between S4 and S5 is involved in control of translational fidelity.

In terms of biological role, one of the primary rRNA binding proteins, it binds directly to 16S rRNA where it nucleates assembly of the body of the 30S subunit. Its function is as follows. With S5 and S12 plays an important role in translational accuracy. This is Small ribosomal subunit protein uS4 from Ehrlichia ruminantium (strain Welgevonden).